A 1190-amino-acid polypeptide reads, in one-letter code: Wings apart-like protein homolog (1190 aa).

Disordered stretches follow at residues 1–23 and 46–82; these read MTSR…FDEV and QKRP…DESL. Positions 1 to 659 are mediates interaction with the cohesin complex; sequence MTSRFGKTYS…ENQEFTDDIE (659 aa). The span at 54–66 shows a compositional bias: basic and acidic residues; the sequence is DIQEIPKKPKVEE. The FGF motif 1 signature appears at 73–75; that stretch reads FGF. A Phosphoserine modification is found at serine 77. Lysine 168 bears the N6-acetyllysine mark. 3 positions are modified to phosphoserine: serine 221, serine 223, and serine 226. The stretch at 260 to 286 forms a coiled coil; it reads LLEMKDDDFKNRLENLNEAIEEDIVQS. 2 positions are modified to phosphoserine: serine 347 and serine 380. The FGF motif 2 motif lies at 429–431; that stretch reads FGF. Residue serine 443 is modified to Phosphoserine. Residues 453–455 carry the FGF motif 3 motif; sequence FGF. Serine 459 and serine 461 each carry phosphoserine. A compositionally biased stretch (acidic residues) spans 459–469; it reads SESEDDEDDDC. Residues 459–553 form a disordered region; the sequence is SESEDDEDDD…SGPKRSPTKA (95 aa). A compositionally biased stretch (polar residues) spans 494-509; that stretch reads SNDNSQDSQSGTNNAE. Over residues 531–540 the composition is skewed to basic and acidic residues; that stretch reads QGDKSKENTR. The region spanning 626-1169 is the WAPL domain; sequence RREDKELYTV…KKFLSFMNLT (544 aa). Residues 749–782 are a coiled coil; sequence ELEQDASSAKLLNEKDMNKIKEKIRRLCETVHNK. Serine 904 carries the post-translational modification Phosphoserine.

It belongs to the WAPL family. Interacts with the cohesin complex throughout the cell cycle; interacts with both chromatin-bound and soluble pools of the complex. Interacts with RAD21; the interaction is direct. Interacts with PDS5A; the interaction is direct, cohesin-dependent and competitive with CDCA5/SORORIN. Interacts (via FGF motifs) with PDS5B; the interaction is direct. Interacts with a SMC1 protein (SMC1A or SMC1B) and SMC3. As to quaternary structure, (Microbial infection) Isoform 2 interacts with Epstein-Barr virus EBNA2. Post-translationally, deubiquitinated by USP37; leading to stabilization. As to expression, isoform 1 is highly expressed in uterine cervix tumor. Isoform 2 is widely expressed with a high level in skeletal muscle and heart.

The protein localises to the nucleus. It is found in the chromosome. Its subcellular location is the cytoplasm. Functionally, regulator of sister chromatid cohesion in mitosis which negatively regulates cohesin association with chromatin. Involved in both sister chromatid cohesion during interphase and sister-chromatid resolution during early stages of mitosis. Couples DNA replication to sister chromatid cohesion. Cohesion ensures that chromosome partitioning is accurate in both meiotic and mitotic cells and plays an important role in DNA repair. The polypeptide is Wings apart-like protein homolog (Homo sapiens (Human)).